The sequence spans 441 residues: Amino-acid acetyltransferase (441 aa).

The 140-residue stretch at 295-434 (EQVRRATIND…QALYNYQRRS (140 aa)) folds into the N-acetyltransferase domain.

The protein belongs to the acetyltransferase family. ArgA subfamily. Homohexamer.

The protein resides in the cytoplasm. The enzyme catalyses L-glutamate + acetyl-CoA = N-acetyl-L-glutamate + CoA + H(+). It functions in the pathway amino-acid biosynthesis; L-arginine biosynthesis; N(2)-acetyl-L-ornithine from L-glutamate: step 1/4. The polypeptide is Amino-acid acetyltransferase (Pectobacterium atrosepticum (strain SCRI 1043 / ATCC BAA-672) (Erwinia carotovora subsp. atroseptica)).